The following is a 314-amino-acid chain: Olfactory receptor 9A4 (314 aa).

Over Met-1 to His-24 the chain is Extracellular. N-linked (GlcNAc...) asparagine glycosylation is present at Asn-4. A helical membrane pass occupies residues Ile-25–Ile-45. Topologically, residues Met-46–Arg-53 are cytoplasmic. The chain crosses the membrane as a helical span at residues Leu-54–Thr-74. At Ile-75 to Val-99 the chain is on the extracellular side. A disulfide bridge connects residues Cys-97 and Cys-189. Residues Gln-100–Val-120 form a helical membrane-spanning segment. The Cytoplasmic portion of the chain corresponds to Asp-121 to His-139. Residues Thr-140–Val-160 form a helical membrane-spanning segment. Residues Tyr-161–Phe-197 are Extracellular-facing. The N-linked (GlcNAc...) asparagine glycan is linked to Asn-190. The chain crosses the membrane as a helical span at residues Ile-198–Ser-217. The Cytoplasmic segment spans residues Asn-218–Ser-237. Residues Phe-238–Leu-258 traverse the membrane as a helical segment. The Extracellular portion of the chain corresponds to Tyr-259–Asn-271. A helical transmembrane segment spans residues Trp-272–Leu-292. Residues Arg-293–Asn-314 lie on the Cytoplasmic side of the membrane.

This sequence belongs to the G-protein coupled receptor 1 family.

Its subcellular location is the cell membrane. In terms of biological role, odorant receptor. In Homo sapiens (Human), this protein is Olfactory receptor 9A4 (OR9A4).